The chain runs to 432 residues: UDP-N-acetylglucosamine 1-carboxyvinyltransferase (432 aa).

22–23 (KN) provides a ligand contact to phosphoenolpyruvate. Arg-102 lines the UDP-N-acetyl-alpha-D-glucosamine pocket. Residue Cys-126 is the Proton donor of the active site. Cys-126 carries the post-translational modification 2-(S-cysteinyl)pyruvic acid O-phosphothioketal. UDP-N-acetyl-alpha-D-glucosamine-binding positions include 131–135 (RPVDL), Asp-317, and Ile-339.

The protein belongs to the EPSP synthase family. MurA subfamily.

The protein resides in the cytoplasm. The enzyme catalyses phosphoenolpyruvate + UDP-N-acetyl-alpha-D-glucosamine = UDP-N-acetyl-3-O-(1-carboxyvinyl)-alpha-D-glucosamine + phosphate. It participates in cell wall biogenesis; peptidoglycan biosynthesis. Functionally, cell wall formation. Adds enolpyruvyl to UDP-N-acetylglucosamine. This Rhodospirillum centenum (strain ATCC 51521 / SW) protein is UDP-N-acetylglucosamine 1-carboxyvinyltransferase.